Reading from the N-terminus, the 93-residue chain is Small ribosomal subunit protein uS19 (93 aa).

The protein belongs to the universal ribosomal protein uS19 family.

Functionally, protein S19 forms a complex with S13 that binds strongly to the 16S ribosomal RNA. This Lacticaseibacillus paracasei (strain ATCC 334 / BCRC 17002 / CCUG 31169 / CIP 107868 / KCTC 3260 / NRRL B-441) (Lactobacillus paracasei) protein is Small ribosomal subunit protein uS19.